The sequence spans 540 residues: CTP synthase (540 aa).

Positions 1 to 267 (MTKYIFVTGG…DQKVCDFLHL (267 aa)) are amidoligase domain. Ser-13 provides a ligand contact to CTP. Ser-13 is a binding site for UTP. 14–19 (SLGKGI) is an ATP binding site. Tyr-54 provides a ligand contact to L-glutamine. Asp-71 provides a ligand contact to ATP. Asp-71 and Glu-141 together coordinate Mg(2+). Residues 148–150 (DIE), 188–193 (KTKPTQ), and Lys-224 each bind CTP. UTP contacts are provided by residues 188–193 (KTKPTQ) and Lys-224. Residues 294–537 (TITLVGKYVE…IGAASGLPAQ (244 aa)) form the Glutamine amidotransferase type-1 domain. Gly-356 contributes to the L-glutamine binding site. Cys-383 acts as the Nucleophile; for glutamine hydrolysis in catalysis. L-glutamine contacts are provided by residues 384 to 387 (LGMQ), Glu-407, and Arg-465. Residues His-510 and Glu-512 contribute to the active site.

This sequence belongs to the CTP synthase family. As to quaternary structure, homotetramer.

The enzyme catalyses UTP + L-glutamine + ATP + H2O = CTP + L-glutamate + ADP + phosphate + 2 H(+). The catalysed reaction is L-glutamine + H2O = L-glutamate + NH4(+). It catalyses the reaction UTP + NH4(+) + ATP = CTP + ADP + phosphate + 2 H(+). It functions in the pathway pyrimidine metabolism; CTP biosynthesis via de novo pathway; CTP from UDP: step 2/2. With respect to regulation, allosterically activated by GTP, when glutamine is the substrate; GTP has no effect on the reaction when ammonia is the substrate. The allosteric effector GTP functions by stabilizing the protein conformation that binds the tetrahedral intermediate(s) formed during glutamine hydrolysis. Inhibited by the product CTP, via allosteric rather than competitive inhibition. In terms of biological role, catalyzes the ATP-dependent amination of UTP to CTP with either L-glutamine or ammonia as the source of nitrogen. Regulates intracellular CTP levels through interactions with the four ribonucleotide triphosphates. The sequence is that of CTP synthase from Lactobacillus johnsonii (strain CNCM I-12250 / La1 / NCC 533).